The sequence spans 270 residues: Methylthioribulose-1-phosphate dehydratase (270 aa).

C122 is a substrate binding site. H140 and H142 together coordinate Zn(2+). The active-site Proton donor/acceptor is the E165. H230 provides a ligand contact to Zn(2+).

It belongs to the aldolase class II family. MtnB subfamily. Zn(2+) serves as cofactor.

It is found in the cytoplasm. The catalysed reaction is 5-(methylsulfanyl)-D-ribulose 1-phosphate = 5-methylsulfanyl-2,3-dioxopentyl phosphate + H2O. It participates in amino-acid biosynthesis; L-methionine biosynthesis via salvage pathway; L-methionine from S-methyl-5-thio-alpha-D-ribose 1-phosphate: step 2/6. Catalyzes the dehydration of methylthioribulose-1-phosphate (MTRu-1-P) into 2,3-diketo-5-methylthiopentyl-1-phosphate (DK-MTP-1-P). This chain is Methylthioribulose-1-phosphate dehydratase, found in Candida albicans (strain SC5314 / ATCC MYA-2876) (Yeast).